The following is a 142-amino-acid chain: Hemoglobin subunit alpha-3 (142 aa).

Residues 2–142 (TLTDSDKAAV…VATVLTSKYR (141 aa)) form the Globin domain. H59 is an O2 binding site. H88 serves as a coordination point for heme b.

The protein belongs to the globin family. In terms of assembly, heterotetramer of two alpha chains and two beta chains. Red blood cells.

Functionally, this is a larval (tadpole) alpha-globin. The polypeptide is Hemoglobin subunit alpha-3 (hba3) (Xenopus laevis (African clawed frog)).